A 526-amino-acid chain; its full sequence is GMP synthase [glutamine-hydrolyzing] (526 aa).

The Glutamine amidotransferase type-1 domain occupies 4-204 (KIVVLDFGSQ…AHAICGCSGD (201 aa)). Cys87 (nucleophile) is an active-site residue. Active-site residues include His178 and Glu180. The region spanning 205–401 (WTPASFVEEQ…LDVPDPIVGR (197 aa)) is the GMPS ATP-PPase domain. 232–238 (SGGVDSS) contributes to the ATP binding site.

As to quaternary structure, homodimer.

The catalysed reaction is XMP + L-glutamine + ATP + H2O = GMP + L-glutamate + AMP + diphosphate + 2 H(+). Its pathway is purine metabolism; GMP biosynthesis; GMP from XMP (L-Gln route): step 1/1. Functionally, catalyzes the synthesis of GMP from XMP. The polypeptide is GMP synthase [glutamine-hydrolyzing] (Salinibacter ruber (strain DSM 13855 / M31)).